Reading from the N-terminus, the 63-residue chain is Metallothionein-2 (63 aa).

The interval 1 to 30 (MDPQDCTCAAGDSCSCAGSCKCKNCRCQSC) is beta. Residues Cys-6, Cys-8, Cys-14, Cys-16, Cys-20, Cys-22, Cys-25, Cys-27, Cys-30, Cys-34, Cys-35, Cys-37, Cys-38, Cys-42, Cys-45, Cys-49, Cys-51, Cys-59, Cys-61, and Cys-62 each contribute to the a divalent metal cation site. Positions 31–63 (RKSCCSCCPASCSNCAKGCVCKEPSSSKCSCCH) are alpha.

The protein belongs to the metallothionein superfamily. Type 1 family.

Functionally, metallothioneins have a high content of cysteine residues that bind various heavy metals. This is Metallothionein-2 from Columba livia (Rock dove).